Reading from the N-terminus, the 153-residue chain is Profilin (153 aa).

The protein belongs to the profilin family. In terms of assembly, occurs in many kinds of cells as a complex with monomeric actin in a 1:1 ratio.

It is found in the cytoplasm. The protein resides in the cytoskeleton. Functionally, binds to actin and affects the structure of the cytoskeleton. At high concentrations, profilin prevents the polymerization of actin, whereas it enhances it at low concentrations. By binding to PIP2, it inhibits the formation of IP3 and DG. The protein is Profilin of Tetrahymena pyriformis.